A 165-amino-acid polypeptide reads, in one-letter code: Phosphopantetheine adenylyltransferase (165 aa).

Threonine 9 is a binding site for substrate. Residues 9 to 10 and histidine 17 each bind ATP; that span reads TF. Substrate-binding residues include lysine 41, leucine 73, and arginine 87. ATP contacts are provided by residues 88-90, glutamate 98, and 123-129; these read GLR and YMFISAT.

The protein belongs to the bacterial CoaD family. As to quaternary structure, homohexamer. The cofactor is Mg(2+).

It is found in the cytoplasm. The catalysed reaction is (R)-4'-phosphopantetheine + ATP + H(+) = 3'-dephospho-CoA + diphosphate. It functions in the pathway cofactor biosynthesis; coenzyme A biosynthesis; CoA from (R)-pantothenate: step 4/5. Its function is as follows. Reversibly transfers an adenylyl group from ATP to 4'-phosphopantetheine, yielding dephospho-CoA (dPCoA) and pyrophosphate. The protein is Phosphopantetheine adenylyltransferase of Nitrosospira multiformis (strain ATCC 25196 / NCIMB 11849 / C 71).